A 478-amino-acid polypeptide reads, in one-letter code: G2/mitotic-specific cyclin-B (478 aa).

Residues 1 to 153 (MNENDENGPS…KTIQQEEPPR (153 aa)) form a disordered region. Residues 16-31 (AKAAALTTDAPAANGA) are compositionally biased toward low complexity. The segment covering 65 to 74 (DNGETKDAKK) has biased composition (basic and acidic residues). The span at 77–102 (SKTGLTSKATMQSGGVQKLSRSNLSR) shows a compositional bias: polar residues. Basic and acidic residues predominate over residues 110–121 (NNVKKPATEAKR). Positions 133-145 (KRTSSQKSLQEKT) are enriched in polar residues.

The protein belongs to the cyclin family. Cyclin AB subfamily.

In terms of biological role, essential for the control of the cell cycle at the G2/M (mitosis) transition. Interacts with the CDC2 protein kinase to form MPF. G2/M cyclins accumulate steadily during G2 and are abruptly destroyed at mitosis. The polypeptide is G2/mitotic-specific cyclin-B (nimE) (Emericella nidulans (strain FGSC A4 / ATCC 38163 / CBS 112.46 / NRRL 194 / M139) (Aspergillus nidulans)).